We begin with the raw amino-acid sequence, 459 residues long: Trigger factor (459 aa).

The region spanning 161-246 is the PPIase FKBP-type domain; the sequence is GDKVVIDFQG…IKKIMEGKLP (86 aa).

Belongs to the FKBP-type PPIase family. Tig subfamily.

The protein localises to the cytoplasm. The enzyme catalyses [protein]-peptidylproline (omega=180) = [protein]-peptidylproline (omega=0). Functionally, involved in protein export. Acts as a chaperone by maintaining the newly synthesized protein in an open conformation. Functions as a peptidyl-prolyl cis-trans isomerase. This is Trigger factor from Legionella pneumophila (strain Corby).